We begin with the raw amino-acid sequence, 320 residues long: Glycerol-3-phosphate dehydrogenase [NAD(P)+] (320 aa).

3 residues coordinate NADPH: F11, R30, and K102. Sn-glycerol 3-phosphate-binding residues include K102, G130, and S132. A134 is a binding site for NADPH. The sn-glycerol 3-phosphate site is built by K185, D238, S248, R249, and N250. The active-site Proton acceptor is K185. R249 contacts NADPH. NADPH is bound at residue E270.

Belongs to the NAD-dependent glycerol-3-phosphate dehydrogenase family.

It is found in the cytoplasm. The catalysed reaction is sn-glycerol 3-phosphate + NAD(+) = dihydroxyacetone phosphate + NADH + H(+). It carries out the reaction sn-glycerol 3-phosphate + NADP(+) = dihydroxyacetone phosphate + NADPH + H(+). Its pathway is membrane lipid metabolism; glycerophospholipid metabolism. Functionally, catalyzes the reduction of the glycolytic intermediate dihydroxyacetone phosphate (DHAP) to sn-glycerol 3-phosphate (G3P), the key precursor for phospholipid synthesis. This chain is Glycerol-3-phosphate dehydrogenase [NAD(P)+], found in Ruegeria sp. (strain TM1040) (Silicibacter sp.).